A 295-amino-acid polypeptide reads, in one-letter code: Bifunctional protein FolD (295 aa).

NADP(+) contacts are provided by residues 169 to 171 (GRG), Thr-196, and Val-237.

The protein belongs to the tetrahydrofolate dehydrogenase/cyclohydrolase family. In terms of assembly, homodimer.

It catalyses the reaction (6R)-5,10-methylene-5,6,7,8-tetrahydrofolate + NADP(+) = (6R)-5,10-methenyltetrahydrofolate + NADPH. The enzyme catalyses (6R)-5,10-methenyltetrahydrofolate + H2O = (6R)-10-formyltetrahydrofolate + H(+). The protein operates within one-carbon metabolism; tetrahydrofolate interconversion. Its function is as follows. Catalyzes the oxidation of 5,10-methylenetetrahydrofolate to 5,10-methenyltetrahydrofolate and then the hydrolysis of 5,10-methenyltetrahydrofolate to 10-formyltetrahydrofolate. The polypeptide is Bifunctional protein FolD (Kineococcus radiotolerans (strain ATCC BAA-149 / DSM 14245 / SRS30216)).